Here is a 465-residue protein sequence, read N- to C-terminus: 3-isopropylmalate dehydratase large subunit (465 aa).

[4Fe-4S] cluster contacts are provided by cysteine 346, cysteine 406, and cysteine 409.

This sequence belongs to the aconitase/IPM isomerase family. LeuC type 1 subfamily. Heterodimer of LeuC and LeuD. [4Fe-4S] cluster serves as cofactor.

The enzyme catalyses (2R,3S)-3-isopropylmalate = (2S)-2-isopropylmalate. It participates in amino-acid biosynthesis; L-leucine biosynthesis; L-leucine from 3-methyl-2-oxobutanoate: step 2/4. Its function is as follows. Catalyzes the isomerization between 2-isopropylmalate and 3-isopropylmalate, via the formation of 2-isopropylmaleate. The sequence is that of 3-isopropylmalate dehydratase large subunit from Psychromonas ingrahamii (strain DSM 17664 / CCUG 51855 / 37).